A 358-amino-acid chain; its full sequence is Phospho-N-acetylmuramoyl-pentapeptide-transferase (358 aa).

9 helical membrane passes run 13–35, 81–101, 106–126, 142–162, 171–191, 201–221, 228–248, 268–290, and 336–356; these read LLIL…IFIG, MGGV…NINL, LFLL…DDFL, FFLQ…KDLI, SWQI…LVGI, LDGL…TEIL, LIIF…FLKY, ILGS…GIFI, and IVEN…VLKI.

The protein belongs to the glycosyltransferase 4 family. MraY subfamily. Mg(2+) is required as a cofactor.

The protein resides in the cell inner membrane. It carries out the reaction UDP-N-acetyl-alpha-D-muramoyl-L-alanyl-gamma-D-glutamyl-meso-2,6-diaminopimeloyl-D-alanyl-D-alanine + di-trans,octa-cis-undecaprenyl phosphate = di-trans,octa-cis-undecaprenyl diphospho-N-acetyl-alpha-D-muramoyl-L-alanyl-D-glutamyl-meso-2,6-diaminopimeloyl-D-alanyl-D-alanine + UMP. Its pathway is cell wall biogenesis; peptidoglycan biosynthesis. In terms of biological role, catalyzes the initial step of the lipid cycle reactions in the biosynthesis of the cell wall peptidoglycan: transfers peptidoglycan precursor phospho-MurNAc-pentapeptide from UDP-MurNAc-pentapeptide onto the lipid carrier undecaprenyl phosphate, yielding undecaprenyl-pyrophosphoryl-MurNAc-pentapeptide, known as lipid I. The chain is Phospho-N-acetylmuramoyl-pentapeptide-transferase from Prochlorococcus marinus (strain MIT 9312).